Here is a 680-residue protein sequence, read N- to C-terminus: Methionine--tRNA ligase (680 aa).

The 'HIGH' region signature appears at 15–25 (PYANGPVHIGH). Residues Cys147, Cys150, Cys160, and Cys163 each contribute to the Zn(2+) site. The 'KMSKS' region motif lies at 332–336 (KISTS). Thr335 serves as a coordination point for ATP. Positions 579 to 680 (DFLKLDIRVG…AEVAPGSQVK (102 aa)) constitute a tRNA-binding domain.

Belongs to the class-I aminoacyl-tRNA synthetase family. MetG type 1 subfamily. Homodimer. Zn(2+) serves as cofactor.

Its subcellular location is the cytoplasm. It catalyses the reaction tRNA(Met) + L-methionine + ATP = L-methionyl-tRNA(Met) + AMP + diphosphate. Functionally, is required not only for elongation of protein synthesis but also for the initiation of all mRNA translation through initiator tRNA(fMet) aminoacylation. In Porphyromonas gingivalis (strain ATCC 33277 / DSM 20709 / CIP 103683 / JCM 12257 / NCTC 11834 / 2561), this protein is Methionine--tRNA ligase.